Reading from the N-terminus, the 120-residue chain is Glutamate--tRNA ligase (120 aa).

This sequence belongs to the class-I aminoacyl-tRNA synthetase family. Glutamate--tRNA ligase type 1 subfamily. Monomer.

It is found in the cytoplasm. The enzyme catalyses tRNA(Glu) + L-glutamate + ATP = L-glutamyl-tRNA(Glu) + AMP + diphosphate. In terms of biological role, catalyzes the attachment of glutamate to tRNA(Glu) in a two-step reaction: glutamate is first activated by ATP to form Glu-AMP and then transferred to the acceptor end of tRNA(Glu). The sequence is that of Glutamate--tRNA ligase (gltX) from Staphylococcus xylosus.